A 916-amino-acid chain; its full sequence is Protein O-GlcNAcase (916 aa).

Residues 1-46 (MVQKESQAALEERESERNANPAAASGASLEQSVAPAPGEDNPSGAG) form a disordered region. The GH84 domain occupies 60–336 (FLCGVVEGFY…TLATWYKSNM (277 aa)). A protein contacts are provided by G67, K98, and D174. The Proton donor role is filled by D175. A protein contacts are provided by residues Y219, 278–280 (WDN), D285, and N313. Residue S364 is modified to Phosphoserine. The interval 443-465 (ALSGEPSVLTKEEEKKQPDEEPM) is disordered. Over residues 452–461 (TKEEEKKQPD) the composition is skewed to basic and acidic residues.

Belongs to the glycosyl hydrolase 84 family. Monomer. Interacts with CLOCK. Proteolytically cleaved by caspase-3 during apoptosis. The fragments interact with each other; cleavage does not decrease enzyme activity.

It is found in the cytoplasm. It localises to the nucleus. The catalysed reaction is 3-O-(N-acetyl-beta-D-glucosaminyl)-L-seryl-[protein] + H2O = N-acetyl-D-glucosamine + L-seryl-[protein]. It carries out the reaction 3-O-(N-acetyl-beta-D-glucosaminyl)-L-threonyl-[protein] + H2O = L-threonyl-[protein] + N-acetyl-D-glucosamine. Its function is as follows. Cleaves GlcNAc but not GalNAc from O-glycosylated proteins. Deglycosylates a large and diverse number of proteins, such as CRYAB, ELK1, GSDMD, LMNB1 and TAB1. Can use p-nitrophenyl-beta-GlcNAc and 4-methylumbelliferone-GlcNAc as substrates but not p-nitrophenyl-beta-GalNAc or p-nitrophenyl-alpha-GlcNAc (in vitro). Does not bind acetyl-CoA and does not have histone acetyltransferase activity. The sequence is that of Protein O-GlcNAcase from Mus musculus (Mouse).